The following is a 237-amino-acid chain: Protein ULTRAPETALA 1 (237 aa).

The region spanning 18 to 116 is the SAND domain; it reads EELQEMSGVN…SKTVLLKYYN (99 aa). A CW-type zinc finger spans residues 133-191; the sequence is VCHRDEFVGCNDCGKERRFRLRSRDECRLHHNAMGDPNWKCSDFPYDKITCEEEEERGS.

As to quaternary structure, interacts with HHO5. Associates with ATX1 for trimethylating 'Lys-4' on histone H3 (H3K4me3) at flower MADS box gene loci. As to expression, expressed at low levels in seedlings, roots, shoots, leaves, stems, inflorescences, pollen, flowers and siliques, with highest levels dividing tissues including inflorescence.

Its subcellular location is the cytoplasm. It is found in the nucleus. Functionally, putative transcription factor that acts as a key negative regulator of cell accumulation in shoot and floral meristems. Negatively regulates the size of the WUSCHEL (WUS)-expressing organizing center in inflorescence meristems. May act by down-regulating expression of WUS. Acts as an antirepressor that counteracts EMF1 action through modulation of trimethylated 'Lys-4' on histone H3 (H3K4me3) marks on target gene loci (including genes involved in salt stress response and flower development). Collaboratively with RBL and CYP40/SQN, influences floral meristem (FM) determinacy in an AGAMOUS and SUPERMAN-dependent manner, thus contributing to the floral developmental homeostasis. The protein is Protein ULTRAPETALA 1 of Arabidopsis thaliana (Mouse-ear cress).